Consider the following 77-residue polypeptide: Dermatoxin-S1 (77 aa).

Residues 1 to 22 form the signal peptide; the sequence is MAFLKKSLFLILFLGLVPLSFC. Positions 23-44 are excised as a propeptide; it reads ENDKREGENEEEQDDDQSEEKR. At Gln76 the chain carries Glutamine amide.

As to expression, expressed by the skin glands.

It is found in the secreted. The protein resides in the target cell membrane. Functionally, antimicrobial peptide with potent activity against Gram-positive bacteria B.megaterium, C.glutamicum and S.aureus and mollicutes A.laidlawii and S.melliferum. Less active against Gram-negative bacteria B.cepacia, P.aeruginosa, S.typhimurium and S.meliloti. Probably acts by disturbing membrane functions with its amphipathic structure. The chain is Dermatoxin-S1 from Phyllomedusa sauvagei (Sauvage's leaf frog).